The following is a 179-amino-acid chain: Large ribosomal subunit protein uL6 (179 aa).

It belongs to the universal ribosomal protein uL6 family. Part of the 50S ribosomal subunit.

In terms of biological role, this protein binds to the 23S rRNA, and is important in its secondary structure. It is located near the subunit interface in the base of the L7/L12 stalk, and near the tRNA binding site of the peptidyltransferase center. This is Large ribosomal subunit protein uL6 from Leptospira interrogans serogroup Icterohaemorrhagiae serovar copenhageni (strain Fiocruz L1-130).